Consider the following 210-residue polypeptide: uncharacterized protein (210 aa).

Positions 1-17 (MKRTAVSLCLLTGLLSG) are cleaved as a signal peptide. C18 is lipidated: N-palmitoyl cysteine. C18 carries S-diacylglycerol cysteine lipidation. The segment covering 176-195 (EMKTSPQGSPVSENENANGE) has biased composition (polar residues). The disordered stretch occupies residues 176-210 (EMKTSPQGSPVSENENANGETRQDMKIDRNDKNAR). The segment covering 196-210 (TRQDMKIDRNDKNAR) has biased composition (basic and acidic residues).

The protein resides in the cell membrane. This is an uncharacterized protein from Bacillus subtilis (strain 168).